Consider the following 155-residue polypeptide: Deoxyuridine 5'-triphosphate nucleotidohydrolase (155 aa).

Substrate is bound by residues Arg74–Gly76, Asn87, and Leu91–Asp93.

This sequence belongs to the dUTPase family. It depends on Mg(2+) as a cofactor.

The catalysed reaction is dUTP + H2O = dUMP + diphosphate + H(+). It participates in pyrimidine metabolism; dUMP biosynthesis; dUMP from dCTP (dUTP route): step 2/2. This enzyme is involved in nucleotide metabolism: it produces dUMP, the immediate precursor of thymidine nucleotides and it decreases the intracellular concentration of dUTP so that uracil cannot be incorporated into DNA. This is Deoxyuridine 5'-triphosphate nucleotidohydrolase from Xanthomonas axonopodis pv. citri (strain 306).